Consider the following 139-residue polypeptide: uncharacterized protein (139 aa).

Residues 83–109 (LIPPKKTSPATSSSLKPPRRPRGCLNG) are disordered. Positions 86 to 98 (PKKTSPATSSSLK) are enriched in low complexity.

It to M.pneumoniae MPN_091 and MPN_463.

This is an uncharacterized protein from Mycoplasma pneumoniae (strain ATCC 29342 / M129 / Subtype 1) (Mycoplasmoides pneumoniae).